The following is a 275-amino-acid chain: Large ribosomal subunit protein uL2 (275 aa).

The tract at residues 225-275 (MNPIDHPHGGGEGRTSGGRHPVTPWGKPTKGKKTRSNKKTDRLIMRRRQTQ) is disordered.

It belongs to the universal ribosomal protein uL2 family. As to quaternary structure, part of the 50S ribosomal subunit. Forms a bridge to the 30S subunit in the 70S ribosome.

One of the primary rRNA binding proteins. Required for association of the 30S and 50S subunits to form the 70S ribosome, for tRNA binding and peptide bond formation. It has been suggested to have peptidyltransferase activity; this is somewhat controversial. Makes several contacts with the 16S rRNA in the 70S ribosome. This is Large ribosomal subunit protein uL2 from Paramagnetospirillum magneticum (strain ATCC 700264 / AMB-1) (Magnetospirillum magneticum).